Here is a 440-residue protein sequence, read N- to C-terminus: Probable exopolygalacturonase C (440 aa).

The N-terminal stretch at 1–21 (MLITNPALLGILASLAPLALG) is a signal peptide. 4 N-linked (GlcNAc...) asparagine glycosylation sites follow: Asn-24, Asn-84, Asn-151, and Asn-219. 2 PbH1 repeats span residues 217–238 (GTNI…AVNT) and 240–261 (SHNI…SIGS). Asp-231 acts as the Proton donor in catalysis. Residue His-255 is part of the active site. The N-linked (GlcNAc...) asparagine glycan is linked to Asn-271. One copy of the PbH1 3 repeat lies at 272-293 (ITNLRFEDVTVIDALYAARFKS). N-linked (GlcNAc...) asparagine glycans are attached at residues Asn-313 and Asn-350. Cys-389 and Cys-395 are joined by a disulfide. Residue Asn-434 is glycosylated (N-linked (GlcNAc...) asparagine).

It belongs to the glycosyl hydrolase 28 family.

The protein localises to the secreted. The catalysed reaction is [(1-&gt;4)-alpha-D-galacturonosyl](n) + H2O = alpha-D-galacturonate + [(1-&gt;4)-alpha-D-galacturonosyl](n-1). Specific in hydrolyzing the terminal glycosidic bond of polygalacturonic acid and oligogalacturonates. The polypeptide is Probable exopolygalacturonase C (pgxC) (Neosartorya fischeri (strain ATCC 1020 / DSM 3700 / CBS 544.65 / FGSC A1164 / JCM 1740 / NRRL 181 / WB 181) (Aspergillus fischerianus)).